A 532-amino-acid chain; its full sequence is IQ domain-containing protein IQM4 (532 aa).

Disordered regions lie at residues 47–67 and 85–104; these read SRTN…TGME and PMNK…RNSL. Residues 56–66 show a composition bias toward basic and acidic residues; sequence NPQEKSPKTGM. The segment covering 85–94 has biased composition (acidic residues); the sequence is PMNKEDEEIV. In terms of domain architecture, IQ spans 136-165; that stretch reads LDAAATTLQKVYKSYRTRRNLADCAVVVEE. 2 disordered regions span residues 410 to 443 and 487 to 513; these read SSGY…KERE and PRIS…PRVR. Positions 487 to 496 are enriched in polar residues; it reads PRISPGSTRF. Over residues 499-509 the composition is skewed to pro residues; it reads PYGPIPSPRPS.

As to expression, expressed in roots, cauline leaves and flowers, and at lower levels in rosette leaves, stems and siliques.

It localises to the cytoplasm. It is found in the nucleus. In terms of biological role, may be involved in biotic and abiotic stress responses. The sequence is that of IQ domain-containing protein IQM4 from Arabidopsis thaliana (Mouse-ear cress).